A 137-amino-acid polypeptide reads, in one-letter code: uncharacterized protein (137 aa).

The next 5 helical transmembrane spans lie at 4-26 (AIIL…KIVC), 35-57 (IVVN…NIII), 62-84 (ILTY…YYAL), 89-111 (ASIV…ILFL), and 116-135 (TLPQ…LLSI). An EamA domain is found at 13-135 (VFYGVGTFFA…IIIGIILLSI (123 aa)).

It is found in the cell membrane. This is an uncharacterized protein from Methanocaldococcus jannaschii (strain ATCC 43067 / DSM 2661 / JAL-1 / JCM 10045 / NBRC 100440) (Methanococcus jannaschii).